The following is a 238-amino-acid chain: MEKEKVNDEKPDPENSLDFSEHFNQLELLETHGHLIPTGTQSLWIGNSDDDEEQDEKTEEWYQLQEKKMEKDPSKLLLWAAEKNRLTTVQRLLSERATHVNTRDEDKYTPLHRAAYNGHLDVVRELIAHGADVHAVTVDGWTPLHSACKWNNARVASFLLQHDADVNAQTKGLLTPLHLAAGNRDSKDTLELLLMNRYIKPGLKNSLEETAFDIARRTGIYHYLFEIVEGCTNCSPQS.

Phosphoserine is present on S48. 4 ANK repeats span residues 77-105, 106-135, 139-168, and 172-205; these read LLWA…TRDE, DKYT…DVHA, DGWT…DVNA, and GLLT…GLKN.

The protein localises to the nucleus. May have a role in spermatogenesis where it promotes autophagy in response to serum starvation, via the NF-kappaB pathway. This chain is Ankyrin repeat domain-containing protein 49 (ANKRD49), found in Bos taurus (Bovine).